We begin with the raw amino-acid sequence, 212 residues long: Deoxyribose-phosphate aldolase (212 aa).

Catalysis depends on Asp-89, which acts as the Proton donor/acceptor. Lys-151 acts as the Schiff-base intermediate with acetaldehyde in catalysis. Lys-180 functions as the Proton donor/acceptor in the catalytic mechanism.

It belongs to the DeoC/FbaB aldolase family. DeoC type 1 subfamily.

The protein localises to the cytoplasm. The catalysed reaction is 2-deoxy-D-ribose 5-phosphate = D-glyceraldehyde 3-phosphate + acetaldehyde. It participates in carbohydrate degradation; 2-deoxy-D-ribose 1-phosphate degradation; D-glyceraldehyde 3-phosphate and acetaldehyde from 2-deoxy-alpha-D-ribose 1-phosphate: step 2/2. Its function is as follows. Catalyzes a reversible aldol reaction between acetaldehyde and D-glyceraldehyde 3-phosphate to generate 2-deoxy-D-ribose 5-phosphate. The sequence is that of Deoxyribose-phosphate aldolase from Clostridium botulinum (strain ATCC 19397 / Type A).